A 325-amino-acid polypeptide reads, in one-letter code: Ribonucleoside-diphosphate reductase small chain (325 aa).

Asp-74, Glu-105, and His-108 together coordinate Fe cation. The active site involves Tyr-112. Fe cation-binding residues include Glu-168, Glu-202, and His-205.

It belongs to the ribonucleoside diphosphate reductase small chain family. As to quaternary structure, heterodimer of a large and a small chain. Fe cation is required as a cofactor.

The catalysed reaction is a 2'-deoxyribonucleoside 5'-diphosphate + [thioredoxin]-disulfide + H2O = a ribonucleoside 5'-diphosphate + [thioredoxin]-dithiol. Functionally, ribonucleoside-diphosphate reductase holoenzyme provides the precursors necessary for viral DNA synthesis. Allows virus growth in non-dividing cells. Catalyzes the biosynthesis of deoxyribonucleotides from the corresponding ribonucleotides. This is Ribonucleoside-diphosphate reductase small chain from Yaba-like disease virus (YLDV).